The following is a 330-amino-acid chain: Cyclin N-terminal domain-containing protein 1 (330 aa).

The Cyclin N-terminal domain maps to 27-178 (DALLHLAQQN…VLKSLNFRIN (152 aa)).

In terms of assembly, interacts with PRR19; this interaction promotes crossover formation. Interacts with RFC3 and RFC4; these interactions facilitate crossover formation. Interacts with CDC34; this interaction regulates the cell-cycle progression.

The protein resides in the nucleus. It localises to the cytoplasm. The protein localises to the chromosome. Plays a role in the different steps of crossover formation during meiotic recombination. Participates in the crossover differentiation step of crossover-specific recombination intermediates through its interaction with PRR19. In addition, stimulates crossover formation through the interactions with RFC3 and RFC4 and simultaneously regulates cell-cycle progression through interactions with CDC34 and subsequent ubiquitination of WEE1. May also participates in an active deselection process that destabilizes or removes excess pre-CO intermediates. The protein is Cyclin N-terminal domain-containing protein 1 of Homo sapiens (Human).